A 341-amino-acid polypeptide reads, in one-letter code: Glyceraldehyde-3-phosphate dehydrogenase 4 (341 aa).

Residues 13–14 (RI), aspartate 35, and lysine 85 each bind NAD(+). Residues 157 to 159 (SCT), threonine 188, 217 to 218 (TG), and arginine 240 each bind D-glyceraldehyde 3-phosphate. The Nucleophile role is filled by cysteine 158. Asparagine 322 contacts NAD(+).

It belongs to the glyceraldehyde-3-phosphate dehydrogenase family. In terms of assembly, homotetramer.

The protein resides in the cytoplasm. It carries out the reaction D-glyceraldehyde 3-phosphate + phosphate + NAD(+) = (2R)-3-phospho-glyceroyl phosphate + NADH + H(+). It participates in carbohydrate degradation; glycolysis; pyruvate from D-glyceraldehyde 3-phosphate: step 1/5. The polypeptide is Glyceraldehyde-3-phosphate dehydrogenase 4 (gpd-4) (Caenorhabditis elegans).